The following is a 324-amino-acid chain: N-acetyl-gamma-glutamyl-phosphate reductase (324 aa).

Residue Cys-131 is part of the active site.

This sequence belongs to the NAGSA dehydrogenase family. Type 1 subfamily.

It is found in the cytoplasm. It carries out the reaction N-acetyl-L-glutamate 5-semialdehyde + phosphate + NADP(+) = N-acetyl-L-glutamyl 5-phosphate + NADPH + H(+). It participates in amino-acid biosynthesis; L-arginine biosynthesis; N(2)-acetyl-L-ornithine from L-glutamate: step 3/4. Its function is as follows. Catalyzes the NADPH-dependent reduction of N-acetyl-5-glutamyl phosphate to yield N-acetyl-L-glutamate 5-semialdehyde. The polypeptide is N-acetyl-gamma-glutamyl-phosphate reductase (Bradyrhizobium sp. (strain BTAi1 / ATCC BAA-1182)).